The chain runs to 174 residues: Urease accessory protein UreE (174 aa).

Positions 146 to 174 are disordered; the sequence is NGAYATGGHAHDHDGEPEHVHGPGCQHAH. Over residues 154–166 the composition is skewed to basic and acidic residues; sequence HAHDHDGEPEHVH.

This sequence belongs to the UreE family.

The protein resides in the cytoplasm. Its function is as follows. Involved in urease metallocenter assembly. Binds nickel. Probably functions as a nickel donor during metallocenter assembly. The protein is Urease accessory protein UreE of Albidiferax ferrireducens (strain ATCC BAA-621 / DSM 15236 / T118) (Rhodoferax ferrireducens).